We begin with the raw amino-acid sequence, 423 residues long: Transmembrane protease serine 11E (423 aa).

Residues 1–18 are Cytoplasmic-facing; it reads MYRSCVVRARKRTCVEPW. Residues 19-39 form a helical; Signal-anchor for type II membrane protein membrane-spanning segment; the sequence is VIGIISFLSLIVLAVCIGLTV. Topologically, residues 40–423 are extracellular; sequence HYVRYNHRRT…RHWIASNTGI (384 aa). The region spanning 48–166 is the SEA domain; the sequence is RTYNYYSTLS…ESVKIKKINK (119 aa). 4 N-linked (GlcNAc...) asparagine glycosylation sites follow: asparagine 74, asparagine 165, asparagine 182, and asparagine 223. Cystine bridges form between cysteine 176–cysteine 297, cysteine 217–cysteine 233, cysteine 342–cysteine 358, and cysteine 369–cysteine 398. In terms of domain architecture, Peptidase S1 spans 192–422; sequence IVGGTPVEEE…FRHWIASNTG (231 aa). Active-site charge relay system residues include histidine 232 and aspartate 277. Serine 373 functions as the Charge relay system in the catalytic mechanism.

This sequence belongs to the peptidase S1 family. In terms of assembly, forms a heterodimer with SERPINA5 and SERPINE1. Post-translationally, N-glycosylated. Expressed in epidermal, oral and male reproductive tissues.

Its subcellular location is the cell membrane. The protein resides in the secreted. With respect to regulation, inhibited by SERPINA5. Serine protease which possesses both gelatinolytic and caseinolytic activities. Shows a preference for Arg in the P1 position. The polypeptide is Transmembrane protease serine 11E (Tmprss11e) (Mus musculus (Mouse)).